A 202-amino-acid chain; its full sequence is Ribonuclease HII (202 aa).

An RNase H type-2 domain is found at 18–202 (GQYAGVDEVG…KSFRPVREAM (185 aa)). Residues aspartate 24, glutamate 25, and aspartate 116 each contribute to the a divalent metal cation site.

This sequence belongs to the RNase HII family. Requires Mn(2+) as cofactor. The cofactor is Mg(2+).

The protein resides in the cytoplasm. The enzyme catalyses Endonucleolytic cleavage to 5'-phosphomonoester.. Its function is as follows. Endonuclease that specifically degrades the RNA of RNA-DNA hybrids. This is Ribonuclease HII from Shewanella piezotolerans (strain WP3 / JCM 13877).